The primary structure comprises 123 residues: Protein Wnt-7a (123 aa).

The O-palmitoleoyl serine; by PORCN moiety is linked to residue Ser-1. The disordered linker stretch occupies residues 33–61; that stretch reads VEPVRASRNKRPTFLKIKKPLSYRKPMDT. Cys-89 and Cys-104 form a disulfide bridge. An N-linked (GlcNAc...) asparagine glycan is attached at Asn-90.

This sequence belongs to the Wnt family. Forms a soluble 1:1 complex with AFM; this prevents oligomerization and is required for prolonged biological activity. The complex with AFM may represent the physiological form in body fluids. Interacts with FZD5. Interacts with PORCN. Palmitoleoylation is required for efficient binding to frizzled receptors. Depalmitoleoylation leads to Wnt signaling pathway inhibition.

Its subcellular location is the secreted. The protein localises to the extracellular space. It is found in the extracellular matrix. Its function is as follows. Ligand for members of the frizzled family of seven transmembrane receptors that functions in the canonical Wnt/beta-catenin signaling pathway. Plays an important role in embryonic development, including dorsal versus ventral patterning during limb development, skeleton development and urogenital tract development. Required for central nervous system (CNS) angiogenesis and blood-brain barrier regulation. The polypeptide is Protein Wnt-7a (WNT7A) (Meleagris gallopavo (Wild turkey)).